The following is a 128-amino-acid chain: Light-regulated protein, chloroplastic (128 aa).

2 tandem repeats follow at residues 58–72 (VFPM…GEAC) and 111–125 (VFPE…GEFC). The interval 58–125 (VFPMEACDLI…ACDDLGGEFC (68 aa)) is 2 X 15 AA approximate repeats.

As to quaternary structure, component of high molecular weight thylakoid LFNRs-containing protein complexes containing LIR1, LFNR1, LFNR2, TIC62 and TROL proteins. Interacts directly with LFNR1 and LFNR2; LIR1 increases the affinity of LFNR1 and LFNR2 for TIC62 and subsequent thylakoid relocalization. Post-translationally, may form interchain disulfide bonds with LFNR1 and LFNR2.

The protein resides in the plastid. Its subcellular location is the chloroplast thylakoid membrane. The protein localises to the chloroplast envelope. It localises to the chloroplast stroma. Thylakoid-determinant subunit of high molecular weight LFNRs-containing protein complexes. This chain is Light-regulated protein, chloroplastic (LIR1), found in Oryza sativa subsp. japonica (Rice).